Here is a 146-residue protein sequence, read N- to C-terminus: 3-dehydroquinate dehydratase (146 aa).

Tyr23 serves as the catalytic Proton acceptor. Substrate is bound by residues Asn74, His80, and Asp87. Residue His100 is the Proton donor of the active site. Substrate contacts are provided by residues 101 to 102 (IS) and Arg111.

The protein belongs to the type-II 3-dehydroquinase family. In terms of assembly, homododecamer.

It carries out the reaction 3-dehydroquinate = 3-dehydroshikimate + H2O. It participates in metabolic intermediate biosynthesis; chorismate biosynthesis; chorismate from D-erythrose 4-phosphate and phosphoenolpyruvate: step 3/7. Its function is as follows. Catalyzes a trans-dehydration via an enolate intermediate. This is 3-dehydroquinate dehydratase from Bacillus cereus (strain B4264).